The sequence spans 351 residues: Phosphate acyltransferase (351 aa).

Belongs to the PlsX family. Homodimer. Probably interacts with PlsY.

It localises to the cytoplasm. The enzyme catalyses a fatty acyl-[ACP] + phosphate = an acyl phosphate + holo-[ACP]. It participates in lipid metabolism; phospholipid metabolism. Catalyzes the reversible formation of acyl-phosphate (acyl-PO(4)) from acyl-[acyl-carrier-protein] (acyl-ACP). This enzyme utilizes acyl-ACP as fatty acyl donor, but not acyl-CoA. This Verminephrobacter eiseniae (strain EF01-2) protein is Phosphate acyltransferase.